Reading from the N-terminus, the 66-residue chain is Large ribosomal subunit protein eL24 (66 aa).

Zn(2+) contacts are provided by cysteine 7, cysteine 10, cysteine 33, and cysteine 37. The segment at 7 to 37 adopts a C4-type zinc-finger fold; sequence CSYCGKPFEPGTGKMYVRNDGRVLFFCSRKC.

This sequence belongs to the eukaryotic ribosomal protein eL24 family. Part of the 50S ribosomal subunit. Forms a cluster with proteins L3 and L14. Requires Zn(2+) as cofactor.

Its function is as follows. Binds to the 23S rRNA. This Pyrococcus furiosus (strain ATCC 43587 / DSM 3638 / JCM 8422 / Vc1) protein is Large ribosomal subunit protein eL24.